The following is a 322-amino-acid chain: Sideroflexin-2 (322 aa).

The residue at position 1 (methionine 1) is an N-acetylmethionine. The next 5 membrane-spanning stretches (helical) occupy residues 99–119, 147–167, 174–194, 223–243, and 266–286; these read GMLITGFMLQFYRTMPAVIFW, ALSYFTATTTAVATAVGMNMW, LVGRWVPFAAVAAANCVNIPM, VGIAQVVISRITMAAPGMILL, and LQVLLCGCFLLFMVPVACGLF.

It belongs to the sideroflexin family. As to expression, expressed in brain, heart, kidney, spleen, thymus, liver, stomach and skin.

The protein localises to the mitochondrion inner membrane. The protein resides in the mitochondrion outer membrane. The enzyme catalyses L-serine(in) = L-serine(out). Its function is as follows. Mitochondrial amino-acid transporter that mediates transport of serine into mitochondria. Involved in mitochondrial iron homeostasis by regulating heme biosynthesis. The sequence is that of Sideroflexin-2 from Mus musculus (Mouse).